The sequence spans 663 residues: COBRA-like protein 9 (663 aa).

The signal sequence occupies residues 1–23 (MGVLLPIFFGVLLLFTVTPPSMS). Residues N63, N111, N121, N169, N203, N326, N355, N397, N409, N429, N470, N550, and N561 are each glycosylated (N-linked (GlcNAc...) asparagine). S638 carries GPI-anchor amidated serine lipidation. A propeptide spans 639 to 663 (GGRRNGAITVLSFITFYVAAFMVLL) (removed in mature form).

This sequence belongs to the COBRA family. As to expression, expressed only in flowers.

It is found in the cell membrane. The protein is COBRA-like protein 9 (COBL9) of Arabidopsis thaliana (Mouse-ear cress).